The following is a 445-amino-acid chain: POU domain, class 3, transcription factor 2 (445 aa).

Disordered regions lie at residues 64–173 and 203–269; these read ALSH…WRSA and LGAG…TPTS. Gly residues predominate over residues 67–90; sequence HGGGGGGGGGGGGGGGGGGGGGDG. Composition is skewed to low complexity over residues 125 to 151 and 163 to 173; these read QQQH…QQQQ and HHPGPGAWRSA. Residues 217–226 show a composition bias toward basic and acidic residues; it reads LRDAHDEPHH. A compositionally biased stretch (basic residues) spans 227-237; it reads ADHHPHPHSHP. The segment covering 239 to 253 has biased composition (pro residues); sequence QQPPPPPPPQGPPGH. A POU-specific domain is found at 264-338; sequence EDTPTSDDLE…LLNKWLEEAD (75 aa). Serine 343 bears the Phosphoserine mark. The homeobox DNA-binding region spans 356-415; sequence KRKKRTSIEVSVKGALESHFLKCPKPSAQEITSLADSLQLEKEVVRVWFCNRRQKEKRMT. A disordered region spans residues 411 to 445; that stretch reads EKRMTPPGGTLPGAEDVYGGSRDTPPHHGVQTPVQ.

This sequence belongs to the POU transcription factor family. Class-3 subfamily. In terms of assembly, interacts with PQBP1. Interaction with ISL1. Expressed specifically in the neuroectodermal cell lineage.

The protein resides in the nucleus. Its function is as follows. Transcription factor that plays a key role in neuronal differentiation. Binds preferentially to the recognition sequence which consists of two distinct half-sites, ('GCAT') and ('TAAT'), separated by a non-conserved spacer region of 0, 2, or 3 nucleotides. Acts as a transcriptional activator when binding cooperatively with SOX4, SOX11, or SOX12 to gene promoters. The combination of three transcription factors, ASCL1, POU3F2/BRN2 and MYT1L, is sufficient to reprogram fibroblasts and other somatic cells into induced neuronal (iN) cells in vitro. Acts downstream of ASCL1, accessing chromatin that has been opened by ASCL1, and promotes transcription of neuronal genes. The protein is POU domain, class 3, transcription factor 2 (Pou3f2) of Mus musculus (Mouse).